Reading from the N-terminus, the 109-residue chain is Putative small proline-rich protein 2J (109 aa).

5 consecutive repeat copies span residues 21–29 (RSAQSPVLC), 30–38 (QSAPSLVLL), 39–47 (QSAQSPIHC), 48–56 (QSALSHAHL), and 57–65 (SHASRNALL). The interval 21 to 65 (RSAQSPVLCQSAPSLVLLQSAQSPIHCQSALSHAHLSHASRNALL) is 5 X 9 AA approximate tandem repeats. Residues 76–109 (AHPRANKGFSSLQNQKKRTESILHKSIATPPSSI) are disordered.

This sequence belongs to the cornifin (SPRR) family. Not expressed in uterus.

The protein localises to the cytoplasm. Its function is as follows. Cross-linked envelope protein of keratinocytes. It is a keratinocyte protein that first appears in the cell cytosol, but ultimately becomes cross-linked to membrane proteins by transglutaminase. All that results in the formation of an insoluble envelope beneath the plasma membrane. In Mus musculus (Mouse), this protein is Putative small proline-rich protein 2J (Sprr2j).